The sequence spans 328 residues: Delta-aminolevulinic acid dehydratase (328 aa).

Lys-200 acts as the Schiff-base intermediate with substrate in catalysis. 2 residues coordinate 5-aminolevulinate: Arg-210 and Lys-222. Glu-238 contributes to the Mg(2+) binding site. Lys-253 (schiff-base intermediate with substrate) is an active-site residue. Residues Ser-279 and Tyr-318 each coordinate 5-aminolevulinate.

This sequence belongs to the ALAD family. Homooctamer.

The enzyme catalyses 2 5-aminolevulinate = porphobilinogen + 2 H2O + H(+). Its pathway is porphyrin-containing compound metabolism; protoporphyrin-IX biosynthesis; coproporphyrinogen-III from 5-aminolevulinate: step 1/4. Its activity is regulated as follows. Stimulated by magnesium, inhibited by zinc. Functionally, catalyzes an early step in the biosynthesis of tetrapyrroles. Binds two molecules of 5-aminolevulinate per subunit, each at a distinct site, and catalyzes their condensation to form porphobilinogen. The polypeptide is Delta-aminolevulinic acid dehydratase (hemB) (Chlorobaculum tepidum (strain ATCC 49652 / DSM 12025 / NBRC 103806 / TLS) (Chlorobium tepidum)).